The chain runs to 431 residues: Enolase (431 aa).

A (2R)-2-phosphoglycerate-binding site is contributed by Gln167. Residue Glu209 is the Proton donor of the active site. Mg(2+) contacts are provided by Asp246, Glu289, and Asp316. (2R)-2-phosphoglycerate-binding residues include Lys341, Arg370, Ser371, and Lys392. The Proton acceptor role is filled by Lys341.

It belongs to the enolase family. In terms of assembly, component of the RNA degradosome, a multiprotein complex involved in RNA processing and mRNA degradation. Mg(2+) serves as cofactor.

The protein resides in the cytoplasm. The protein localises to the secreted. It localises to the cell surface. The catalysed reaction is (2R)-2-phosphoglycerate = phosphoenolpyruvate + H2O. The protein operates within carbohydrate degradation; glycolysis; pyruvate from D-glyceraldehyde 3-phosphate: step 4/5. Its function is as follows. Catalyzes the reversible conversion of 2-phosphoglycerate (2-PG) into phosphoenolpyruvate (PEP). It is essential for the degradation of carbohydrates via glycolysis. This is Enolase from Shewanella woodyi (strain ATCC 51908 / MS32).